Consider the following 161-residue polypeptide: Disulfide bond formation protein B (161 aa).

Topologically, residues 1 to 8 (MQANSRAY) are cytoplasmic. The chain crosses the membrane as a helical span at residues 9-25 (FLLIAFISFGLVGFALY). The Periplasmic portion of the chain corresponds to 26–43 (LQFEKGYQPCPLCIMQRF). A disulfide bond links cysteine 35 and cysteine 38. The helical transmembrane segment at 44-58 (AFIGIGLFSLLAVIA) threads the bilayer. At 59–63 (QNTRS) the chain is on the cytoplasmic side. Residues 64–81 (LWQGLGMLSGVGGIAVAV) form a helical membrane-spanning segment. The Periplasmic portion of the chain corresponds to 82–136 (YHVSLLLNPKASCGIDPLENWVNALPTAKVLPQVFYSDGLCTAPLPPVLGLSVPA). Cysteines 94 and 122 form a disulfide. Residues 137–155 (WSLIWLFILTLTLAVGLIR) form a helical membrane-spanning segment. The Cytoplasmic segment spans residues 156–161 (REKNFR).

Belongs to the DsbB family.

Its subcellular location is the cell inner membrane. Functionally, required for disulfide bond formation in some periplasmic proteins. Acts by oxidizing the DsbA protein. In Cupriavidus pinatubonensis (strain JMP 134 / LMG 1197) (Cupriavidus necator (strain JMP 134)), this protein is Disulfide bond formation protein B.